The chain runs to 208 residues: Large ribosomal subunit protein bL25 (208 aa).

The disordered stretch occupies residues 184-208; that stretch reads VTISGTSSDQDTSGGESSGTTTSED. Residues 187–208 are compositionally biased toward low complexity; sequence SGTSSDQDTSGGESSGTTTSED.

The protein belongs to the bacterial ribosomal protein bL25 family. CTC subfamily. In terms of assembly, part of the 50S ribosomal subunit; part of the 5S rRNA/L5/L18/L25 subcomplex. Contacts the 5S rRNA. Binds to the 5S rRNA independently of L5 and L18.

This is one of the proteins that binds to the 5S RNA in the ribosome where it forms part of the central protuberance. This is Large ribosomal subunit protein bL25 from Ehrlichia ruminantium (strain Gardel).